Consider the following 261-residue polypeptide: Transcription antitermination protein NusB (261 aa).

The disordered stretch occupies residues 168–261 (ARVEDQPSDD…DLHKKDTTDD (94 aa)). Polar residues predominate over residues 217–228 (VDTTSGNASDPE). The segment covering 242-261 (PTSKDHELATDLHKKDTTDD) has biased composition (basic and acidic residues).

It belongs to the NusB family.

Involved in transcription antitermination. Required for transcription of ribosomal RNA (rRNA) genes. Binds specifically to the boxA antiterminator sequence of the ribosomal RNA (rrn) operons. In Cutibacterium acnes (strain DSM 16379 / KPA171202) (Propionibacterium acnes), this protein is Transcription antitermination protein NusB.